A 1041-amino-acid polypeptide reads, in one-letter code: Serine-repeat antigen protein 6 (1041 aa).

An N-terminal signal peptide occupies residues 1-34 (MIFFNFKLNRMICPIFFLYIINVLFTQYFIKCEG). The N-linked (GlcNAc...) asparagine glycan is linked to Asn84. Positions 101–111 (KVVSSSESGKG) are enriched in low complexity. The segment at 101–173 (KVVSSSESGK…TESSSETLNK (73 aa)) is disordered. Over residues 114 to 149 (VSHTKVTSEGLSDTQPNVTQSVSSSTHTPGSLDSTM) the composition is skewed to polar residues. The N-linked (GlcNAc...) asparagine glycan is linked to Asn130. Low complexity predominate over residues 150-168 (STEQHSSVSQSSLPTESSS). An N-linked (GlcNAc...) asparagine glycan is attached at Asn459. Positions 500–577 (TLPSESPSES…GDTNYVYDFD (78 aa)) are disordered. Over residues 502 to 515 (PSESPSESSSKSDS) the composition is skewed to low complexity. A compositionally biased stretch (basic and acidic residues) spans 521–545 (NDKDKNEDKDDMSKNSKEEFKNDDK). A glycan (N-linked (GlcNAc...) asparagine) is linked at Asn554. A compositionally biased stretch (low complexity) spans 564-574 (NINNGDTNYVY). Residue Asn583 is glycosylated (N-linked (GlcNAc...) asparagine). Cys654 is an active-site residue. An N-linked (GlcNAc...) asparagine glycan is attached at Asn684. Residues His820 and Asn845 contribute to the active site. Residue Asn984 is glycosylated (N-linked (GlcNAc...) asparagine).

The protein belongs to the peptidase C1 family. Post-translationally, just prior to merozoite egress from host erythrocytes, proteolytically cleaved by SUB1 to generate the active 75kDa form.

It is found in the parasitophorous vacuole lumen. The protein resides in the parasitophorous vacuole membrane. In terms of biological role, cysteine protease which plays an essential role in merozoite egress from host erythrocytes. May cleave host SPTB/beta spectrin and ANK1/ankyrin-1 which disrupts host erythrocyte actin cytoskeleton and leads to host erythrocyte cell membrane rupture. This chain is Serine-repeat antigen protein 6, found in Plasmodium falciparum.